Here is an 850-residue protein sequence, read N- to C-terminus: Endoribonuclease ysh-1 (850 aa).

Zn(2+) contacts are provided by histidine 83, histidine 85, aspartate 87, histidine 88, histidine 173, and aspartate 194. Histidine 442 (proton donor) is an active-site residue. Residue histidine 464 participates in Zn(2+) binding. 2 disordered regions span residues 685-708 (VKRS…PHSH) and 732-784 (SPIV…EQQL). A compositionally biased stretch (polar residues) spans 744–754 (PTTKAITSPSE). The segment covering 755–766 (ETAKSSDVKSDA) has biased composition (basic and acidic residues). A compositionally biased stretch (acidic residues) spans 767-781 (DADASMDVSEEDEDE).

This sequence belongs to the metallo-beta-lactamase superfamily. RNA-metabolizing metallo-beta-lactamase-like family. CPSF2/YSH1 subfamily.

The protein localises to the nucleus. Functionally, component of the cleavage factor I (CF I) involved in pre-mRNA 3'-end processing. The protein is Endoribonuclease ysh-1 (ysh-1) of Neurospora crassa (strain ATCC 24698 / 74-OR23-1A / CBS 708.71 / DSM 1257 / FGSC 987).